A 198-amino-acid chain; its full sequence is TATA-box-binding protein (198 aa).

2 tandem repeats follow at residues 14–90 (IENI…IKTL) and 105–181 (IQNI…FDKL).

It belongs to the TBP family.

General factor that plays a role in the activation of archaeal genes transcribed by RNA polymerase. Binds specifically to the TATA box promoter element which lies close to the position of transcription initiation. This chain is TATA-box-binding protein, found in Saccharolobus shibatae (strain ATCC 51178 / DSM 5389 / JCM 8931 / NBRC 15437 / B12) (Sulfolobus shibatae).